The chain runs to 825 residues: Breast cancer anti-estrogen resistance protein 3 homolog (825 aa).

N-acetylalanine is present on A2. Phosphoserine occurs at positions 32, 78, 83, 182, and 290. The interval 40 to 84 (EAYPDVSIHGTLPRKKKGPPPIRSCDSASHMGTLPHSKSPRQSSP) is disordered. The SH2 domain maps to 154–253 (WYHGRIPRQV…QSGAIIFQPI (100 aa)). A disordered region spans residues 300 to 320 (DHSLPRGNLLRNKDKSGSQPA). The residue at position 334 (K334) is an N6-methyllysine. Phosphoserine occurs at positions 358, 363, and 375. At R442 the chain carries Omega-N-methylarginine. S471 is subject to Phosphoserine. Positions 548-818 (DARVIAQHML…TALSRKLEPP (271 aa)) constitute a Ras-GEF domain. Residues 744-748 (LATAR) are mediates the interaction with BCAR1/p130CAS.

In terms of assembly, part of a complex comprised of PTPRA, BCAR1, BCAR3 and SRC; the formation of the complex is dependent on integrin mediated-tyrosine phosphorylation of PTPRA. Within the complex, interacts (via SH2 domain) with PTPRA (when phosphorylated on 'Tyr-792'). Interacts (via Ras-GEF domain) with BCAR1. Interacts (via Ras-GEF domain) with NEDD9. Interacts with PTK2/FAK1. Interacts with PTPN1. Interacts (via SH2 domain) with EGFR (when tyrosine-phosphorylated). Post-translationally, phosphorylated on tyrosine residues.

Its subcellular location is the cytoplasm. The protein localises to the cell junction. It is found in the focal adhesion. In terms of biological role, acts as an adapter protein downstream of several growth factor receptors to promote cell proliferation, migration, and redistribution of actin fibers. Specifically involved in INS/insulin signaling pathway by mediating MAPK1/ERK2-MAPK3/ERK1 activation and DNA synthesis. Promotes insulin-mediated membrane ruffling. In response to vasoconstrictor peptide EDN1, involved in the activation of RAP1 downstream of PTK2B via interaction with phosphorylated BCAR1. Inhibits cell migration and invasion via regulation of TGFB-mediated matrix digestion, actin filament rearrangement, and inhibition of invadopodia activity. May inhibit TGFB/SMAD signaling, via facilitating BCAR1 and SMAD2 and/or SMAD3 interaction. Regulates EGF-induced DNA synthesis. Required for the maintenance of ocular lens morphology and structural integrity, potentially via regulation of focal adhesion complex signaling. Acts upstream of PTPRA to regulate the localization of BCAR1 and PTPRA to focal adhesions, via regulation of SRC-mediated phosphorylation of PTPRA. Positively regulates integrin-induced tyrosine phosphorylation of BCAR1. Acts as a guanine nucleotide exchange factor (GEF) for small GTPases RALA, RAP1A and RRAS. However, in a contrasting study, lacks GEF activity towards RAP1. The protein is Breast cancer anti-estrogen resistance protein 3 homolog of Rattus norvegicus (Rat).